We begin with the raw amino-acid sequence, 260 residues long: 4-hydroxy-tetrahydrodipicolinate reductase (260 aa).

Residues 12–17, 92–94, and 118–121 each bind NAD(+); these read GFRGKM, GTT, and APNF. Residue H148 is the Proton donor/acceptor of the active site. H149 contacts (S)-2,3,4,5-tetrahydrodipicolinate. K152 serves as the catalytic Proton donor. 158–159 is a binding site for (S)-2,3,4,5-tetrahydrodipicolinate; the sequence is GT.

It belongs to the DapB family.

It localises to the cytoplasm. The catalysed reaction is (S)-2,3,4,5-tetrahydrodipicolinate + NAD(+) + H2O = (2S,4S)-4-hydroxy-2,3,4,5-tetrahydrodipicolinate + NADH + H(+). It carries out the reaction (S)-2,3,4,5-tetrahydrodipicolinate + NADP(+) + H2O = (2S,4S)-4-hydroxy-2,3,4,5-tetrahydrodipicolinate + NADPH + H(+). It functions in the pathway amino-acid biosynthesis; L-lysine biosynthesis via DAP pathway; (S)-tetrahydrodipicolinate from L-aspartate: step 4/4. Catalyzes the conversion of 4-hydroxy-tetrahydrodipicolinate (HTPA) to tetrahydrodipicolinate. The chain is 4-hydroxy-tetrahydrodipicolinate reductase from Lactococcus lactis subsp. cremoris (strain SK11).